A 348-amino-acid polypeptide reads, in one-letter code: D-fructose 1,6-bisphosphatase class 2/sedoheptulose 1,7-bisphosphatase 2 (348 aa).

Mn(2+)-binding residues include Asp-33, Glu-57, Asp-97, and Glu-100. Substrate is bound by residues 100–102 (EGT), Tyr-131, 176–178 (RER), and 198–200 (DGD). Position 225 (Glu-225) interacts with Mn(2+).

This sequence belongs to the FBPase class 2 family. Homotetramer.

The catalysed reaction is beta-D-fructose 1,6-bisphosphate + H2O = beta-D-fructose 6-phosphate + phosphate. The enzyme catalyses D-sedoheptulose 1,7-bisphosphate + H2O = D-sedoheptulose 7-phosphate + phosphate. The protein operates within carbohydrate biosynthesis; Calvin cycle. Catalyzes the hydrolysis of fructose 1,6-bisphosphate (Fru 1,6-P2) and sedoheptulose 1,7-bisphosphate (Sed 1,7-P2) to fructose 6-phosphate and sedoheptulose 7-phosphate, respectively. The polypeptide is D-fructose 1,6-bisphosphatase class 2/sedoheptulose 1,7-bisphosphatase 2 (Acaryochloris marina (strain MBIC 11017)).